A 214-amino-acid polypeptide reads, in one-letter code: Large ribosomal subunit protein uL3 (214 aa).

Positions 133 to 153 (GRATHGNSRSHNVPGSIGMAQ) are disordered. Gln-153 bears the N5-methylglutamine mark.

Belongs to the universal ribosomal protein uL3 family. In terms of assembly, part of the 50S ribosomal subunit. Forms a cluster with proteins L14 and L19. In terms of processing, methylated by PrmB.

In terms of biological role, one of the primary rRNA binding proteins, it binds directly near the 3'-end of the 23S rRNA, where it nucleates assembly of the 50S subunit. The chain is Large ribosomal subunit protein uL3 from Cupriavidus metallidurans (strain ATCC 43123 / DSM 2839 / NBRC 102507 / CH34) (Ralstonia metallidurans).